The primary structure comprises 125 residues: Oxytocin-neurophysin 1 (125 aa).

A signal peptide spans 1–19; sequence MAGSSLACCLLGLLALTSA. The cysteines at positions 20 and 25 are disulfide-linked. Gly-28 bears the Glycine amide mark. Disulfide bonds link Cys-41-Cys-85, Cys-44-Cys-58, Cys-52-Cys-75, Cys-59-Cys-65, Cys-92-Cys-104, Cys-98-Cys-116, and Cys-105-Cys-110.

Belongs to the vasopressin/oxytocin family. Interacts with oxytocin receptor (Ki=1.5 nM). Interacts with vasopressin V1aR/AVPR1A (Ki=37 nM), V1bR/AVPR1B (Ki=222 nM), and V2R/AVPR2 receptors (Ki=823 nM).

The protein resides in the secreted. Its function is as follows. Neurophysin 1 specifically binds oxytocin. Oxytocin causes contraction of the smooth muscle of the uterus and of the mammary gland. Acts by binding to oxytocin receptor (OXTR). The polypeptide is Oxytocin-neurophysin 1 (OXT) (Bos taurus (Bovine)).